Reading from the N-terminus, the 98-residue chain is NADH-ubiquinone oxidoreductase chain 4L (98 aa).

Helical transmembrane passes span 2-22, 29-49, and 61-81; these read TLTT…TLIF, TLLC…ITAL, and ITTL…LTMV.

Belongs to the complex I subunit 4L family. Core subunit of respiratory chain NADH dehydrogenase (Complex I) which is composed of 45 different subunits.

The protein resides in the mitochondrion inner membrane. It carries out the reaction a ubiquinone + NADH + 5 H(+)(in) = a ubiquinol + NAD(+) + 4 H(+)(out). In terms of biological role, core subunit of the mitochondrial membrane respiratory chain NADH dehydrogenase (Complex I) which catalyzes electron transfer from NADH through the respiratory chain, using ubiquinone as an electron acceptor. Part of the enzyme membrane arm which is embedded in the lipid bilayer and involved in proton translocation. The chain is NADH-ubiquinone oxidoreductase chain 4L (MT-ND4L) from Oxymycterus rufus (Red hocicudo).